The following is a 693-amino-acid chain: Polyribonucleotide nucleotidyltransferase (693 aa).

Residues Asp-486 and Asp-492 each contribute to the Mg(2+) site. Residues Pro-553–Ile-612 form the KH domain. The region spanning Gly-622–Lys-690 is the S1 motif domain.

It belongs to the polyribonucleotide nucleotidyltransferase family. Component of the RNA degradosome, which is a multiprotein complex involved in RNA processing and mRNA degradation. Requires Mg(2+) as cofactor.

It localises to the cytoplasm. It carries out the reaction RNA(n+1) + phosphate = RNA(n) + a ribonucleoside 5'-diphosphate. In terms of biological role, involved in mRNA degradation. Catalyzes the phosphorolysis of single-stranded polyribonucleotides processively in the 3'- to 5'-direction. The protein is Polyribonucleotide nucleotidyltransferase of Dichelobacter nodosus (strain VCS1703A).